A 317-amino-acid polypeptide reads, in one-letter code: Putative 2-hydroxyacid dehydrogenase SERP1888 (317 aa).

NAD(+) contacts are provided by residues 155–156, 234–236, and Asp-260; these read EI and AGR. Arg-236 is a catalytic residue. Residue Glu-265 is part of the active site. His-283 (proton donor) is an active-site residue. Residue 283 to 286 coordinates NAD(+); the sequence is HIGN.

The protein belongs to the D-isomer specific 2-hydroxyacid dehydrogenase family.

The sequence is that of Putative 2-hydroxyacid dehydrogenase SERP1888 from Staphylococcus epidermidis (strain ATCC 35984 / DSM 28319 / BCRC 17069 / CCUG 31568 / BM 3577 / RP62A).